The chain runs to 539 residues: Chaperonin GroEL (539 aa).

Residues 29–32 (TLGP), 86–90 (DGTTT), Gly413, 477–479 (DAL), and Asp493 each bind ATP.

Belongs to the chaperonin (HSP60) family. In terms of assembly, forms a cylinder of 14 subunits composed of two heptameric rings stacked back-to-back. Interacts with the co-chaperonin GroES.

It is found in the cytoplasm. It carries out the reaction ATP + H2O + a folded polypeptide = ADP + phosphate + an unfolded polypeptide.. In terms of biological role, together with its co-chaperonin GroES, plays an essential role in assisting protein folding. The GroEL-GroES system forms a nano-cage that allows encapsulation of the non-native substrate proteins and provides a physical environment optimized to promote and accelerate protein folding. This Clostridium perfringens (strain 13 / Type A) protein is Chaperonin GroEL.